Reading from the N-terminus, the 264-residue chain is uncharacterized protein (264 aa).

An N-terminal signal peptide occupies residues 1-21; that stretch reads MMWNYFVTCIVLYANIISIHT. The disordered stretch occupies residues 182–247; it reads QQPNAAQVPT…AANNGLDLTS (66 aa). Residues 190 to 213 are compositionally biased toward low complexity; the sequence is PTTSQQQPTSNTGGQQPPTNASNP. A glycan (N-linked (GlcNAc...) asparagine) is linked at N209. Positions 214 to 226 are enriched in pro residues; it reads PTNPQPTPTPAQP. The span at 230-247 shows a compositional bias: polar residues; that stretch reads GTQVQQTPAANNGLDLTS.

Component of the acid-insoluble and acid-soluble organic matrix of calcified layers of the shell (at protein level).

The protein resides in the secreted. This is an uncharacterized protein from Lottia gigantea (Giant owl limpet).